Reading from the N-terminus, the 232-residue chain is CMP-N,N'-diacetyllegionaminic acid synthase (232 aa).

Belongs to the CMP-NeuNAc synthase family.

The enzyme catalyses N,N-diacetyllegionaminate + CTP = CMP-N,N-diacetyllegionaminate + diphosphate. In terms of biological role, involved in biosynthesis of legionaminic acid (5,7-diamino-3,5,7,9-tetradeoxy-D-glycero-D-galacto-non-2-ulosonic acid)(Leg), a sialic acid-like derivative that is incorporated into virulence-associated cell surface glycoconjugates such as lipopolysaccharide (LPS) which could be a key determinant in the ability of L.pneumophila to inhibit the fusion of phagosomes with lysosomes. LPS contains a majority alpha2,4-linked homomer of legionaminic acid. Catalyzes the conversion of N,N'-diacetyllegionaminic acid (Leg5Ac7Ac) and CTP into CMP-N,N'-diacetyllegionaminic acid (CMP-Leg5Ac7Ac). This is CMP-N,N'-diacetyllegionaminic acid synthase (neuA) from Legionella pneumophila subsp. pneumophila (strain Philadelphia 1 / ATCC 33152 / DSM 7513).